Reading from the N-terminus, the 373-residue chain is Sensor protein DegM (373 aa).

4 helical membrane-spanning segments follow: residues 27–47 (ILLAFLYGGKRAGWGVAAIAV), 57–77 (LFLLGVVLIVLTALFYALCVN), 91–111 (YASLLVILPATIQTFGTLYLI), and 122–142 (VAGWLYIVFLVVTVVLVTYLF). The Histidine kinase domain occupies 170–370 (SIAHEVRNPL…KVVLSLPIEK (201 aa)). At histidine 173 the chain carries Phosphohistidine; by autocatalysis.

It localises to the cell membrane. It catalyses the reaction ATP + protein L-histidine = ADP + protein N-phospho-L-histidine.. Involved in a sensory transduction pathway that enhances the production of minor proteases. The chain is Sensor protein DegM (degM) from Bacillus sp. (strain B21-2).